A 1294-amino-acid chain; its full sequence is Ethylene-insensitive protein 2 (1294 aa).

Residues 1-12 (MEAEIVNVRPQL) are Cytoplasmic-facing. The helical transmembrane segment at 13 to 33 (GFIQRMVPALLPVLLVSVGYI) threads the bilayer. Over 34–50 (DPGKWVANIEGGARFGY) the chain is Extracellular. The helical transmembrane segment at 51–71 (DLVAITLLFNFAAILCQYVAA) threads the bilayer. Residues 72–105 (RISVVTGKHLAQICNEEYDKWTCMFLGIQAEFSA) lie on the Cytoplasmic side of the membrane. Residues 106–126 (ILLDLTMVVGVAHALNLLFGV) traverse the membrane as a helical segment. A topological domain (extracellular) is located at residue Glu127. Residues 128 to 148 (LSTGVFLAAMDAFLFPVFASF) traverse the membrane as a helical segment. Topologically, residues 149–155 (LENGMAN) are cytoplasmic. Residues 156-176 (TVSIYSAGLVLLLYVSGVLLS) form a helical membrane-spanning segment. The Extracellular portion of the chain corresponds to 177–194 (QSEIPLSMNGVLTRLNGE). The helical transmembrane segment at 195-215 (SAFALMGLLGASIVPHNFYIH) threads the bilayer. The Cytoplasmic portion of the chain corresponds to 216–237 (SYFAGESTSSSDVDKSSLCQDH). The helical transmembrane segment at 238 to 258 (LFAIFGVFSGLSLVNYVLMNA) threads the bilayer. The Extracellular portion of the chain corresponds to 259-287 (AANVFHSTGLVVLTFHDALSLMEQVFMSP). A helical transmembrane segment spans residues 288–308 (LIPVVFLMLLFFSSQITALAW). At 309–334 (AFGGEVVLHDFLKIEIPAWLHRATIR) the chain is on the cytoplasmic side. The next 2 helical transmembrane spans lie at 335-355 (ILAVAPALYCVWTSGADGIYQ) and 356-376 (LLIFTQVLVAMMLPCSVIPLF). At 377–397 (RIASSRQIMGVHKIPQVGEFL) the chain is on the cytoplasmic side. The helical transmembrane segment at 398–418 (ALTTFLGFLGLNVVFVVEMVF) threads the bilayer. Over 419-440 (GSSDWAGGLRWNTVMGTSIQYT) the chain is Extracellular. Residues 441-461 (TLLVSSCASLCLILWLAATPL) traverse the membrane as a helical segment. Over 462-1294 (KSASNRAEAQ…KNVTAYGSLG (833 aa)) the chain is Cytoplasmic. 2 disordered regions span residues 534 to 561 (TDQEIRSSPPEERELDVKYSTSQVSSLK) and 623 to 662 (ETEEATKAAPTSNFTVGSDGPPSFRSLSGEGGSGTGSLSR). The span at 536 to 550 (QEIRSSPPEERELDV) shows a compositional bias: basic and acidic residues. Ser645, Ser659, and Ser757 each carry phosphoserine. A Phosphothreonine modification is found at Thr819. Position 924 is a phosphoserine (Ser924). A Nuclear localization signal motif is present at residues 1262-1269 (LKRYKRRL). Positions 1269-1294 (LSNKPVGMNQDGPGSRKNVTAYGSLG) are disordered. The residue at position 1283 (Ser1283) is a Phosphoserine.

The protein belongs to the NRAMP (TC 2.A.55) family. Interacts (via NLS) with ETR1. Interacts (via C-terminus) with EER5 and the COP9 signalosome subunits CSN3, CSN6A and CSN6B. Interacts with ETP1 and ETP2. Interacts with CTR1. Interacts with all members of the ethylene receptor family, including ETR1, ETR2, ERS1, ERS2 and EIN4. Binds to MRF3/ECIP1. In terms of assembly, interacts with several P-body components, such as XRN4/EIN5, PAB2, PAB4 and PAB8. Binds to ENAP1 in the presence of ethylene; this reaction facilitates its association with histone. In terms of processing, phosphorylated by CTR1 on at least 4 sites. Phosphorylation of Ser-645 and Ser-924 is involved in repressing EIN2 signaling. Loss of phosphorylation results in nuclear localization of the C-terminus of EIN2. As to expression, localized to the guard cells after methyl jasmonate treatment.

Its subcellular location is the endoplasmic reticulum membrane. The protein localises to the nucleus. It is found in the cytoplasm. Its function is as follows. Central factor in signaling pathways regulated by ethylene (ET) and involved in various processes including development, plant defense, senescence, nucleotide sugar flux, and tropisms. Necessary for ethylene-mediated gene regulation, and for the induction of some genes by ozone. Acts downstream of ET receptors, and upstream of ethylene regulated transcription factors. Required for cytokinin-mediated processes. Seems to be implicated in cross-talk between ET, jasmonate and other pathways. Probably not involved in iron uptake. Has a short half-life and undergoes rapid proteasome-mediated turnover in the absence of ethylene. Required for ethylene-induced EIN3 stabilization via proteasomal degradation of EBF1/EBF2 proteins. Regulates the leaf senescence induced by methyl jasmonate, ethylene and abscisic acid. Required during salt stress to confer resistance. Functionally, trafficking signal inducing ethylene response. The nuclear localization is both necessary and sufficient to activate EIN3-mediated transcription and ethylene responses. Involved in ethylene (ET)-mediated signaling pathways by triggering histone acetylation of H3K14 and H3K23 in an ENAP1-dependent manner, thus influencing the expression of ethylene-responsive genes. Necessary and sufficient for 3'-UTR-mediated translational repression of EBF1 and EBF2 mRNAs. Ethylene induces EIN2-CEND to associate with 3' UTRs in cytoplasmic foci and target EBF1/2 mRNAs to cytoplasmic processing-body (P-body). MPK6 regulates the cleavage and nuclear translocation of EIN2-CEND under methyl jasmonate treatment. Required for EIN3 accumulation. This Arabidopsis thaliana (Mouse-ear cress) protein is Ethylene-insensitive protein 2.